The sequence spans 180 residues: Endoribonuclease YbeY (180 aa).

Zn(2+) contacts are provided by His-149, His-153, and His-159.

The protein belongs to the endoribonuclease YbeY family. Zn(2+) is required as a cofactor.

The protein localises to the cytoplasm. Single strand-specific metallo-endoribonuclease involved in late-stage 70S ribosome quality control and in maturation of the 3' terminus of the 16S rRNA. The protein is Endoribonuclease YbeY of Prochlorococcus marinus subsp. pastoris (strain CCMP1986 / NIES-2087 / MED4).